The sequence spans 312 residues: tRNA dimethylallyltransferase (312 aa).

Position 11–18 (11–18 (GLTATGKT)) interacts with ATP. Residue 13–18 (TATGKT) coordinates substrate. The interaction with substrate tRNA stretch occupies residues 36 to 39 (DSMC).

This sequence belongs to the IPP transferase family. Monomer. Mg(2+) is required as a cofactor.

It catalyses the reaction adenosine(37) in tRNA + dimethylallyl diphosphate = N(6)-dimethylallyladenosine(37) in tRNA + diphosphate. Its function is as follows. Catalyzes the transfer of a dimethylallyl group onto the adenine at position 37 in tRNAs that read codons beginning with uridine, leading to the formation of N6-(dimethylallyl)adenosine (i(6)A). The sequence is that of tRNA dimethylallyltransferase from Caldicellulosiruptor saccharolyticus (strain ATCC 43494 / DSM 8903 / Tp8T 6331).